The following is a 184-amino-acid chain: Nucleoside triphosphate pyrophosphatase (184 aa).

The Proton acceptor role is filled by D71.

It belongs to the Maf family. A divalent metal cation serves as cofactor.

It is found in the cytoplasm. The enzyme catalyses a ribonucleoside 5'-triphosphate + H2O = a ribonucleoside 5'-phosphate + diphosphate + H(+). It carries out the reaction a 2'-deoxyribonucleoside 5'-triphosphate + H2O = a 2'-deoxyribonucleoside 5'-phosphate + diphosphate + H(+). Functionally, nucleoside triphosphate pyrophosphatase. May have a dual role in cell division arrest and in preventing the incorporation of modified nucleotides into cellular nucleic acids. The sequence is that of Nucleoside triphosphate pyrophosphatase from Synechococcus sp. (strain CC9605).